The chain runs to 198 residues: Na(+)-translocating NADH-quinone reductase subunit E (198 aa).

Transmembrane regions (helical) follow at residues 11–31, 35–55, 77–97, 110–130, 140–160, and 176–196; these read AVFV…FLAV, VSTA…AVPI, FLNF…LEMI, GIFL…SFMV, IVYG…MAGI, and LGIT…FSGV.

Belongs to the NqrDE/RnfAE family. As to quaternary structure, composed of six subunits; NqrA, NqrB, NqrC, NqrD, NqrE and NqrF.

It is found in the cell inner membrane. It carries out the reaction a ubiquinone + n Na(+)(in) + NADH + H(+) = a ubiquinol + n Na(+)(out) + NAD(+). In terms of biological role, NQR complex catalyzes the reduction of ubiquinone-1 to ubiquinol by two successive reactions, coupled with the transport of Na(+) ions from the cytoplasm to the periplasm. NqrA to NqrE are probably involved in the second step, the conversion of ubisemiquinone to ubiquinol. This Klebsiella pneumoniae subsp. pneumoniae (strain ATCC 700721 / MGH 78578) protein is Na(+)-translocating NADH-quinone reductase subunit E.